Consider the following 112-residue polypeptide: uncharacterized protein (112 aa).

The tract at residues 70-112 (GLYRGRRPPGRDAARPTTAILFAQGRPPLLDQRAPTRRGSHQR) is disordered.

This is an uncharacterized protein from Homo sapiens (Human).